The sequence spans 186 residues: UPF0301 protein CV_3909 (186 aa).

It belongs to the UPF0301 (AlgH) family.

The chain is UPF0301 protein CV_3909 from Chromobacterium violaceum (strain ATCC 12472 / DSM 30191 / JCM 1249 / CCUG 213 / NBRC 12614 / NCIMB 9131 / NCTC 9757 / MK).